The primary structure comprises 424 residues: NADH-quinone oxidoreductase subunit H (424 aa).

9 consecutive transmembrane segments (helical) span residues 11-31 (LVVA…LVAI), 79-99 (FVYF…FAFI), 119-139 (LPVA…GIVL), 160-180 (VISY…YAGS), 193-213 (VWYI…MVGE), 255-275 (VSAL…PLNL), 283-303 (WWPV…YFWL), 317-337 (ALGW…AAVI), and 347-367 (YWTP…VMSL). Positions 376 to 424 (AVTKARRRGKQPAAGPDEQGALEPLFPTPPLPMKPLAQPVGASKENARG) are disordered.

This sequence belongs to the complex I subunit 1 family. NDH-1 is composed of 14 different subunits. Subunits NuoA, H, J, K, L, M, N constitute the membrane sector of the complex.

It is found in the cell membrane. It carries out the reaction a quinone + NADH + 5 H(+)(in) = a quinol + NAD(+) + 4 H(+)(out). NDH-1 shuttles electrons from NADH, via FMN and iron-sulfur (Fe-S) centers, to quinones in the respiratory chain. The immediate electron acceptor for the enzyme in this species is believed to be menaquinone. Couples the redox reaction to proton translocation (for every two electrons transferred, four hydrogen ions are translocated across the cytoplasmic membrane), and thus conserves the redox energy in a proton gradient. This subunit may bind ubiquinone. This chain is NADH-quinone oxidoreductase subunit H, found in Mycobacterium ulcerans (strain Agy99).